The chain runs to 1070 residues: DNA-directed RNA polymerase subunit beta (1070 aa).

This sequence belongs to the RNA polymerase beta chain family. In plastids the minimal PEP RNA polymerase catalytic core is composed of four subunits: alpha, beta, beta', and beta''. When a (nuclear-encoded) sigma factor is associated with the core the holoenzyme is formed, which can initiate transcription.

It localises to the plastid. Its subcellular location is the chloroplast. The enzyme catalyses RNA(n) + a ribonucleoside 5'-triphosphate = RNA(n+1) + diphosphate. Functionally, DNA-dependent RNA polymerase catalyzes the transcription of DNA into RNA using the four ribonucleoside triphosphates as substrates. This is DNA-directed RNA polymerase subunit beta from Piper cenocladum (Ant piper).